A 210-amino-acid polypeptide reads, in one-letter code: Proline-rich protein 20G (210 aa).

Basic residues predominate over residues 1–11; that stretch reads MEEPRHSKRPR. The disordered stretch occupies residues 1–82; sequence MEEPRHSKRP…GGSWRAGRGR (82 aa). A compositionally biased stretch (gly residues) spans 69–82; it reads GQRGGGSWRAGRGR.

It belongs to the PRR20 family.

The polypeptide is Proline-rich protein 20G (Homo sapiens (Human)).